A 62-amino-acid polypeptide reads, in one-letter code: Prokaryotic ubiquitin-like protein Pup (62 aa).

The interval 1–36 is disordered; it reads MEKSSQIHGSKPGDDNADEPENAAGQSQIRKQGADD. Residues 18–56 form an ARC ATPase binding region; that stretch reads DEPENAAGQSQIRKQGADDLLDEIDGLLESNAEEFVRSY. Gln62 carries the post-translational modification Deamidated glutamine. An Isoglutamyl lysine isopeptide (Gln-Lys) (interchain with K-? in acceptor proteins) cross-link involves residue Gln62.

This sequence belongs to the prokaryotic ubiquitin-like protein family. As to quaternary structure, strongly interacts with the proteasome-associated ATPase ARC through a hydrophobic interface; the interacting region of Pup lies in its C-terminal half. There is one Pup binding site per ARC hexamer ring. In terms of processing, is modified by deamidation of its C-terminal glutamine to glutamate by the deamidase Dop, a prerequisite to the subsequent pupylation process.

It functions in the pathway protein degradation; proteasomal Pup-dependent pathway. Protein modifier that is covalently attached to lysine residues of substrate proteins, thereby targeting them for proteasomal degradation. The tagging system is termed pupylation. The chain is Prokaryotic ubiquitin-like protein Pup from Corynebacterium kroppenstedtii (strain DSM 44385 / JCM 11950 / CIP 105744 / CCUG 35717).